The following is a 939-amino-acid chain: AP-2 complex subunit alpha-2 (939 aa).

Residues 11–12 (RG), Lys-43, Tyr-53, and 57–61 (KYVCK) contribute to the a 1,2-diacyl-sn-glycero-3-phospho-(1D-myo-inositol-3,4,5-trisphosphate) site. The tract at residues 612–681 (LAKLKKKKGP…AGPPPSSGGS (70 aa)) is disordered. The span at 646–667 (PASTSAVSTPSPSADLLGLGAA) shows a compositional bias: low complexity. Positions 668-677 (PPAPAGPPPS) are enriched in pro residues.

The protein belongs to the adaptor complexes large subunit family. Adaptor protein complex 2 (AP-2) is a heterotetramer composed of two large adaptins (alpha-type subunit AP2A1 or AP2A2 and beta-type subunit AP2B1), a medium adaptin (mu-type subunit AP2M1) and a small adaptin (sigma-type subunit AP2S1). Binds EPN1, EPS15, AMPH, SNAP91 and BIN1. Interacts with HIP1. Interacts with DGKD. Interacts with DENND1A, DENND1B and DENND1C. Interacts with FCHO1 and DAB2. Interacts with ATAT1; this interaction is required for efficient alpha-tubulin acetylation by ATAT1. Interacts with KIAA1107. Together with AP2B1 and AP2M1, it interacts with ADAM10; this interaction facilitates ADAM10 endocytosis from the plasma membrane during long-term potentiation in hippocampal neurons. Interacts with CLN3 (via dileucine motif). Interacts with ABCB11; this interaction regulates cell membrane expression of ABCB11 through its internalization in a clathrin-dependent manner and its subsequent degradation. Interacts with Cacfd1. Interacts with DNAJC6. As to expression, expressed in the brain (at protein level).

The protein resides in the cell membrane. It localises to the membrane. Its subcellular location is the coated pit. Its function is as follows. Component of the adaptor protein complex 2 (AP-2). Adaptor protein complexes function in protein transport via transport vesicles in different membrane traffic pathways. Adaptor protein complexes are vesicle coat components and appear to be involved in cargo selection and vesicle formation. AP-2 is involved in clathrin-dependent endocytosis in which cargo proteins are incorporated into vesicles surrounded by clathrin (clathrin-coated vesicles, CCVs) which are destined for fusion with the early endosome. The clathrin lattice serves as a mechanical scaffold but is itself unable to bind directly to membrane components. Clathrin-associated adaptor protein (AP) complexes which can bind directly to both the clathrin lattice and to the lipid and protein components of membranes are considered to be the major clathrin adaptors contributing the CCV formation. AP-2 also serves as a cargo receptor to selectively sort the membrane proteins involved in receptor-mediated endocytosis. AP-2 seems to play a role in the recycling of synaptic vesicle membranes from the presynaptic surface. AP-2 recognizes Y-X-X-[FILMV] (Y-X-X-Phi) and [ED]-X-X-X-L-[LI] endocytosis signal motifs within the cytosolic tails of transmembrane cargo molecules. AP-2 may also play a role in maintaining normal post-endocytic trafficking through the ARF6-regulated, non-clathrin pathway. During long-term potentiation in hippocampal neurons, AP-2 is responsible for the endocytosis of ADAM10. The AP-2 alpha subunit binds polyphosphoinositide-containing lipids, positioning AP-2 on the membrane. The AP-2 alpha subunit acts via its C-terminal appendage domain as a scaffolding platform for endocytic accessory proteins. The AP-2 alpha and AP-2 sigma subunits are thought to contribute to the recognition of the [ED]-X-X-X-L-[LI] motif. This is AP-2 complex subunit alpha-2 (AP2A2) from Homo sapiens (Human).